The following is a 1404-amino-acid chain: DNA-directed RNA polymerase subunit beta' (1404 aa).

Zn(2+)-binding residues include C70, C72, C85, and C88. Residues D460, D462, and D464 each contribute to the Mg(2+) site. Zn(2+) contacts are provided by C814, C888, C895, and C898.

Belongs to the RNA polymerase beta' chain family. In terms of assembly, the RNAP catalytic core consists of 2 alpha, 1 beta, 1 beta' and 1 omega subunit. When a sigma factor is associated with the core the holoenzyme is formed, which can initiate transcription. Mg(2+) is required as a cofactor. The cofactor is Zn(2+).

It catalyses the reaction RNA(n) + a ribonucleoside 5'-triphosphate = RNA(n+1) + diphosphate. Functionally, DNA-dependent RNA polymerase catalyzes the transcription of DNA into RNA using the four ribonucleoside triphosphates as substrates. The sequence is that of DNA-directed RNA polymerase subunit beta' from Shewanella halifaxensis (strain HAW-EB4).